Consider the following 644-residue polypeptide: 1-deoxy-D-xylulose-5-phosphate synthase (644 aa).

Thiamine diphosphate-binding positions include H78 and 120–122; that span reads GHA. Mg(2+) is bound at residue D150. Thiamine diphosphate-binding positions include 151-152, N179, and E374; that span reads AA. N179 contacts Mg(2+).

Belongs to the transketolase family. DXPS subfamily. Homodimer. Mg(2+) serves as cofactor. It depends on thiamine diphosphate as a cofactor.

It catalyses the reaction D-glyceraldehyde 3-phosphate + pyruvate + H(+) = 1-deoxy-D-xylulose 5-phosphate + CO2. The protein operates within metabolic intermediate biosynthesis; 1-deoxy-D-xylulose 5-phosphate biosynthesis; 1-deoxy-D-xylulose 5-phosphate from D-glyceraldehyde 3-phosphate and pyruvate: step 1/1. Catalyzes the acyloin condensation reaction between C atoms 2 and 3 of pyruvate and glyceraldehyde 3-phosphate to yield 1-deoxy-D-xylulose-5-phosphate (DXP). This chain is 1-deoxy-D-xylulose-5-phosphate synthase, found in Chlamydia pneumoniae (Chlamydophila pneumoniae).